The primary structure comprises 340 residues: Protein RecA (340 aa).

Residue 65-72 (GPESGGKT) participates in ATP binding.

This sequence belongs to the RecA family.

It localises to the cytoplasm. Functionally, can catalyze the hydrolysis of ATP in the presence of single-stranded DNA, the ATP-dependent uptake of single-stranded DNA by duplex DNA, and the ATP-dependent hybridization of homologous single-stranded DNAs. It interacts with LexA causing its activation and leading to its autocatalytic cleavage. The protein is Protein RecA of Thermus thermophilus.